The chain runs to 85 residues: Large ribosomal subunit protein bL27 (85 aa).

Residues 1–21 form a disordered region; that stretch reads MAHKKGVGSSRNGRDSDGQRL.

This sequence belongs to the bacterial ribosomal protein bL27 family.

This is Large ribosomal subunit protein bL27 from Geobacter sp. (strain M21).